A 440-amino-acid chain; its full sequence is GTPase Der (440 aa).

EngA-type G domains follow at residues proline 4–aspartate 169 and isoleucine 178–alanine 353. Residues glycine 10–serine 17, aspartate 57–isoleucine 61, asparagine 120–aspartate 123, glycine 184–serine 191, aspartate 231–isoleucine 235, and asparagine 296–aspartate 299 each bind GTP. A KH-like domain is found at methionine 354–glutamate 438.

The protein belongs to the TRAFAC class TrmE-Era-EngA-EngB-Septin-like GTPase superfamily. EngA (Der) GTPase family. Associates with the 50S ribosomal subunit.

Functionally, GTPase that plays an essential role in the late steps of ribosome biogenesis. In Acetivibrio thermocellus (strain ATCC 27405 / DSM 1237 / JCM 9322 / NBRC 103400 / NCIMB 10682 / NRRL B-4536 / VPI 7372) (Clostridium thermocellum), this protein is GTPase Der.